The chain runs to 76 residues: Conotoxin TxMEKL-011 (76 aa).

The first 19 residues, 1–19 (MEKLTILLLVAAVLMSTQA), serve as a signal peptide directing secretion. Positions 20-45 (LVERAGENRSKENIKFLLKRKRAADR) are excised as a propeptide. 3 disulfides stabilise this stretch: C51/C65, C58/C69, and C64/C73.

This sequence belongs to the conotoxin O2 superfamily. As to expression, expressed by the venom duct.

It localises to the secreted. The polypeptide is Conotoxin TxMEKL-011 (Conus textile (Cloth-of-gold cone)).